A 356-amino-acid polypeptide reads, in one-letter code: Isocitrate dehydrogenase [NAD] subunit 1, mitochondrial (356 aa).

Positions 106, 137, and 224 each coordinate substrate. D224 is a binding site for Mg(2+).

The protein belongs to the isocitrate and isopropylmalate dehydrogenases family. Octamer of two non-identical subunits IDH1 and IDH2. It depends on Mg(2+) as a cofactor. The cofactor is Mn(2+).

It is found in the mitochondrion. The enzyme catalyses D-threo-isocitrate + NAD(+) = 2-oxoglutarate + CO2 + NADH. In terms of biological role, performs an essential role in the oxidative function of the citric acid cycle. Also binds RNA; specifically to the 5'-untranslated leaders of mitochondrial mRNAs. In Schizosaccharomyces pombe (strain 972 / ATCC 24843) (Fission yeast), this protein is Isocitrate dehydrogenase [NAD] subunit 1, mitochondrial (idh1).